A 449-amino-acid polypeptide reads, in one-letter code: Endoglucanase A (449 aa).

The tat-type signal signal peptide spans 1–31; the sequence is MSTRRTAAALLAAAAVAVGGLTALTTTAAQA. Residues 32–137 enclose the CBM2 domain; sequence APGCRVDYAV…SLNGTTCTGT (106 aa). Cysteines 35 and 134 form a disulfide. Positions 127–170 are disordered; that stretch reads FSLNGTTCTGTVPTTSPTPTPTPTTPTPTPTPTPTPTPTVTPQP. Residues 132 to 141 are compositionally biased toward low complexity; it reads TTCTGTVPTT. The linker ('hinge') (Pro-Thr box) stretch occupies residues 139–168; the sequence is PTTSPTPTPTPTTPTPTPTPTPTPTPTVTP. Over residues 142 to 167 the composition is skewed to pro residues; it reads SPTPTPTPTTPTPTPTPTPTPTPTVT. Residue Asp-247 is part of the active site. Cystine bridges form between Cys-248/Cys-291 and Cys-390/Cys-426. The active-site Proton donor is Asp-283. Asp-423 (nucleophile) is an active-site residue. A catalytic region spans residues 438-449; the sequence is EIALEMARNARW.

Belongs to the glycosyl hydrolase 6 (cellulase B) family. The linker region (also termed 'hinge') may be a potential site for proteolysis. In terms of processing, predicted to be exported by the Tat system. The position of the signal peptide cleavage has not been experimentally proven.

The catalysed reaction is Endohydrolysis of (1-&gt;4)-beta-D-glucosidic linkages in cellulose, lichenin and cereal beta-D-glucans.. The biological conversion of cellulose to glucose generally requires three types of hydrolytic enzymes: (1) Endoglucanases which cut internal beta-1,4-glucosidic bonds; (2) Exocellobiohydrolases that cut the disaccharide cellobiose from the non-reducing end of the cellulose polymer chain; (3) Beta-1,4-glucosidases which hydrolyze the cellobiose and other short cello-oligosaccharides to glucose. The protein is Endoglucanase A (cenA) of Cellulomonas fimi.